The following is a 343-amino-acid chain: Ferredoxin--NADP reductase (343 aa).

The FAD site is built by Asp31, Lys39, Tyr43, Val83, Ile118, Asp285, and Ser326.

The protein belongs to the ferredoxin--NADP reductase type 2 family. In terms of assembly, homodimer. FAD is required as a cofactor.

The enzyme catalyses 2 reduced [2Fe-2S]-[ferredoxin] + NADP(+) + H(+) = 2 oxidized [2Fe-2S]-[ferredoxin] + NADPH. The protein is Ferredoxin--NADP reductase of Staphylococcus saprophyticus subsp. saprophyticus (strain ATCC 15305 / DSM 20229 / NCIMB 8711 / NCTC 7292 / S-41).